A 389-amino-acid polypeptide reads, in one-letter code: Innexin-6 (389 aa).

The next 4 membrane-spanning stretches (helical) occupy residues 36-56, 111-131, 190-210, and 276-296; these read VVILAVSSALLLSSHFIGDPI, VFALQAFLFYIPRFIWKAMIA, LFYTLSTVWQAVNAWIQFYIL, and LFIFLWFWLVFVAVVSTVNCF.

The protein belongs to the pannexin family.

Its subcellular location is the cell membrane. It is found in the cell junction. The protein resides in the gap junction. In terms of biological role, structural component of the gap junctions. The chain is Innexin-6 (inx-6) from Caenorhabditis elegans.